Consider the following 1213-residue polypeptide: DNA-directed RNA polymerase subunit beta' (1213 aa).

Zn(2+)-binding residues include cysteine 60, cysteine 62, cysteine 75, and cysteine 78. Mg(2+)-binding residues include aspartate 450, aspartate 452, and aspartate 454. The Zn(2+) site is built by cysteine 819, cysteine 893, cysteine 900, and cysteine 903.

The protein belongs to the RNA polymerase beta' chain family. As to quaternary structure, the RNAP catalytic core consists of 2 alpha, 1 beta, 1 beta' and 1 omega subunit. When a sigma factor is associated with the core the holoenzyme is formed, which can initiate transcription. Requires Mg(2+) as cofactor. Zn(2+) is required as a cofactor.

It carries out the reaction RNA(n) + a ribonucleoside 5'-triphosphate = RNA(n+1) + diphosphate. DNA-dependent RNA polymerase catalyzes the transcription of DNA into RNA using the four ribonucleoside triphosphates as substrates. In Streptococcus pyogenes serotype M2 (strain MGAS10270), this protein is DNA-directed RNA polymerase subunit beta'.